Here is a 151-residue protein sequence, read N- to C-terminus: UPF0178 protein YaiI (151 aa).

This sequence belongs to the UPF0178 family.

This chain is UPF0178 protein YaiI, found in Salmonella paratyphi B (strain ATCC BAA-1250 / SPB7).